We begin with the raw amino-acid sequence, 354 residues long: Peptide chain release factor 1 (354 aa).

Gln230 carries the N5-methylglutamine modification.

Belongs to the prokaryotic/mitochondrial release factor family. Methylated by PrmC. Methylation increases the termination efficiency of RF1.

It localises to the cytoplasm. In terms of biological role, peptide chain release factor 1 directs the termination of translation in response to the peptide chain termination codons UAG and UAA. This Novosphingobium aromaticivorans (strain ATCC 700278 / DSM 12444 / CCUG 56034 / CIP 105152 / NBRC 16084 / F199) protein is Peptide chain release factor 1.